A 1205-amino-acid polypeptide reads, in one-letter code: Centrosome and spindle pole associated protein 1 (1205 aa).

2 coiled-coil regions span residues 12-34 and 87-108; these read QKAK…EMKG and KLKE…TQAK. The segment at 16–37 is disordered; sequence LAKDKAELESDPPYMEMKGKAS. A compositionally biased stretch (basic and acidic residues) spans 158–173; sequence STEKVRQVEKNIEPKS. Disordered regions lie at residues 158 to 187, 222 to 277, and 380 to 467; these read STEK…KSDL, SRRP…PGVS, and QQKK…GSTL. The segment covering 176 to 187 has biased composition (polar residues); sequence NKNPISQGKSDL. 2 stretches are compositionally biased toward basic and acidic residues: residues 222-233 and 257-275; these read SRRPLKQTKEEV and ANGE…RDPG. The stretch at 357-391 forms a coiled coil; that stretch reads EDRELTKRRKEKYRQELLEQIAEQQKKKRREKDLA. Basic and acidic residues-rich tracts occupy residues 401-410 and 417-428; these read DPEKSPDRLK and RHFEEMPPERPR. S405 carries the post-translational modification Phosphoserine. The segment covering 433–447 has biased composition (pro residues); sequence TPPPPFSAPSSPSVP. Residues 574–618 are a coiled coil; that stretch reads STQSLQSYQEALQEQIREREARRKKERLEKEEYEAKLEAEMRIYN. Positions 677-704 are disordered; the sequence is AENLEDSANKNSGPLQTQSSPFARGNTF. Polar residues predominate over residues 685-697; that stretch reads NKNSGPLQTQSSP. A coiled-coil region spans residues 724 to 813; sequence RFQIEEKRQR…EKHNLQLQHY (90 aa). S850 and S869 each carry phosphoserine. The tract at residues 862 to 881 is disordered; the sequence is SSMSRAQSPPVPARKNQLRA. Residues 874 to 911 are a coiled coil; sequence ARKNQLRAEEEKKNVIMELSEMRKQLRSEERRLQGRLL. S915 carries the phosphoserine modification. A coiled-coil region spans residues 993–1014; sequence QQQALLREQQKRLNRIKMRRDA. Disordered stretches follow at residues 1086–1105, 1124–1169, and 1182–1205; these read GLDF…SLKS, RLTE…RPGT, and NEEQ…AAHA. The segment covering 1124–1134 has biased composition (basic and acidic residues); it reads RLTEQQKKPTN. Residues 1135 to 1145 are compositionally biased toward acidic residues; that stretch reads TDDEGSLVDPD. Residues 1146–1156 show a composition bias toward basic and acidic residues; that stretch reads DIMRHLSDDGR.

As to quaternary structure, interacts with PLEKHG6. Interacts with ARMC9, TOGARAM1, CCDC66, CEP104 and CEP290. Post-translationally, phosphorylated. Phosphorylation increases in colcemide-treated cells.

Its subcellular location is the cytoplasm. It is found in the cytoskeleton. It localises to the microtubule organizing center. The protein resides in the centrosome. The protein localises to the spindle. Its subcellular location is the spindle pole. It is found in the cell projection. It localises to the cilium. Functionally, may play a role in cell-cycle-dependent microtubule organization. The sequence is that of Centrosome and spindle pole associated protein 1 (Cspp1) from Mus musculus (Mouse).